Consider the following 324-residue polypeptide: Aprataxin (324 aa).

Residues 23–72 enclose the FHA-like domain; that stretch reads SVTLGRGPDTKIKDKKCSREQVELRADCNRGFVTVKQLGVNPTLVDDVVV. The interval 100–160 is disordered; it reads TEDTSRSKPS…QGLKASMQDP (61 aa). A compositionally biased stretch (polar residues) spans 111–125; that stretch reads RAQQIQSPTKTTADV. In terms of domain architecture, HIT spans 150-255; that stretch reads SQGLKASMQD…ISQDFDSPCL (106 aa). Interaction with DNA substrate stretches follow at residues 175–179 and 237–238; these read DKYPK and SM. The short motif at 240–244 is the Histidine triad motif element; that stretch reads HVHLH. H242 (tele-AMP-histidine intermediate) is an active-site residue. The C2H2-type zinc-finger motif lies at 299 to 321; that stretch reads LRCHVCGKEQTTIPKLKDHLKTH.

The protein localises to the nucleus. Its subcellular location is the nucleoplasm. It localises to the nucleolus. The enzyme catalyses a 5'-end adenosine-5'-diphospho-5'-2'-deoxyribonucleoside-DNA + H2O = a 5'-end 5'-phospho-2'-deoxyribonucleoside-DNA + AMP + 2 H(+). The catalysed reaction is a 5'-end adenosine-5'-diphospho-5'-ribonucleoside-2'-deoxyribonucleotide-DNA + H2O = a 5'-end 5'-phospho-ribonucleoside-2'-deoxyribonucleotide-DNA + AMP + 2 H(+). It carries out the reaction a 3'-end 2'-deoxyribonucleotide-3'-diphospho-5'-guanosine-DNA + H2O = a 3'-end 2'-deoxyribonucleotide 3'-phosphate-DNA + GMP + 2 H(+). Its function is as follows. DNA-binding protein involved in single-strand DNA break repair, double-strand DNA break repair and base excision repair. Resolves abortive DNA ligation intermediates formed either at base excision sites, or when DNA ligases attempt to repair non-ligatable breaks induced by reactive oxygen species. Catalyzes the release of adenylate groups covalently linked to 5'-phosphate termini, resulting in the production of 5'-phosphate termini that can be efficiently rejoined. Also able to hydrolyze adenosine 5'-monophosphoramidate (AMP-NH(2)) and diadenosine tetraphosphate (AppppA), but with lower catalytic activity. Likewise, catalyzes the release of 3'-linked guanosine (DNAppG) and inosine (DNAppI) from DNA, but has higher specific activity with 5'-linked adenosine (AppDNA). This is Aprataxin (aptx) from Danio rerio (Zebrafish).